The chain runs to 292 residues: Alpha-soluble NSF attachment protein (292 aa).

This sequence belongs to the SNAP family.

The protein localises to the cytoplasmic vesicle. It localises to the membrane. Required for vesicular transport between the endoplasmic reticulum and the Golgi apparatus. Also between the endosome and phagosome. In Drosophila melanogaster (Fruit fly), this protein is Alpha-soluble NSF attachment protein.